The following is a 536-amino-acid chain: CTP synthase (536 aa).

Residues 1-267 (MSKFVFVTGG…CKETLKYLEL (267 aa)) are amidoligase domain. Residue S13 participates in CTP binding. UTP is bound at residue S13. ATP contacts are provided by residues 14-19 (SIGKGI) and D71. Mg(2+)-binding residues include D71 and E141. CTP is bound by residues 148–150 (DIE), 188–193 (KTKPTQ), and K224. UTP is bound by residues 188-193 (KTKPTQ) and K224. Residues 292–534 (KVALVGKYIE…IKASQEKLTQ (243 aa)) form the Glutamine amidotransferase type-1 domain. Residue G354 coordinates L-glutamine. The active-site Nucleophile; for glutamine hydrolysis is the C381. L-glutamine-binding positions include 382-385 (LGMQ), E405, and R462. Residues H507 and E509 contribute to the active site.

It belongs to the CTP synthase family. As to quaternary structure, homotetramer.

It catalyses the reaction UTP + L-glutamine + ATP + H2O = CTP + L-glutamate + ADP + phosphate + 2 H(+). The catalysed reaction is L-glutamine + H2O = L-glutamate + NH4(+). It carries out the reaction UTP + NH4(+) + ATP = CTP + ADP + phosphate + 2 H(+). Its pathway is pyrimidine metabolism; CTP biosynthesis via de novo pathway; CTP from UDP: step 2/2. With respect to regulation, allosterically activated by GTP, when glutamine is the substrate; GTP has no effect on the reaction when ammonia is the substrate. The allosteric effector GTP functions by stabilizing the protein conformation that binds the tetrahedral intermediate(s) formed during glutamine hydrolysis. Inhibited by the product CTP, via allosteric rather than competitive inhibition. Its function is as follows. Catalyzes the ATP-dependent amination of UTP to CTP with either L-glutamine or ammonia as the source of nitrogen. Regulates intracellular CTP levels through interactions with the four ribonucleotide triphosphates. This Prochlorococcus marinus (strain MIT 9215) protein is CTP synthase.